We begin with the raw amino-acid sequence, 479 residues long: ATP synthase subunit beta (479 aa).

168–175 (GGAGVGKT) lines the ATP pocket.

Belongs to the ATPase alpha/beta chains family. As to quaternary structure, F-type ATPases have 2 components, CF(1) - the catalytic core - and CF(0) - the membrane proton channel. CF(1) has five subunits: alpha(3), beta(3), gamma(1), delta(1), epsilon(1). CF(0) has three main subunits: a(1), b(2) and c(9-12). The alpha and beta chains form an alternating ring which encloses part of the gamma chain. CF(1) is attached to CF(0) by a central stalk formed by the gamma and epsilon chains, while a peripheral stalk is formed by the delta and b chains.

Its subcellular location is the cell membrane. The enzyme catalyses ATP + H2O + 4 H(+)(in) = ADP + phosphate + 5 H(+)(out). Its function is as follows. Produces ATP from ADP in the presence of a proton gradient across the membrane. The catalytic sites are hosted primarily by the beta subunits. In Parafrankia sp. (strain EAN1pec), this protein is ATP synthase subunit beta.